An 846-amino-acid chain; its full sequence is Aminopeptidase N (846 aa).

Substrate is bound by residues Glu-120 and 252–256 (GAMEN). His-288 serves as a coordination point for Zn(2+). The active-site Proton acceptor is Glu-289. Residues His-292 and Glu-311 each coordinate Zn(2+).

This sequence belongs to the peptidase M1 family. Monomer. Zn(2+) is required as a cofactor.

It localises to the cytoplasm. It catalyses the reaction Release of an N-terminal amino acid, Xaa-|-Yaa- from a peptide, amide or arylamide. Xaa is preferably Ala, but may be most amino acids including Pro (slow action). When a terminal hydrophobic residue is followed by a prolyl residue, the two may be released as an intact Xaa-Pro dipeptide.. Its function is as follows. Aminopeptidase with broad substrate specificity to several peptides. It has more affinity for oligopeptides than for dipeptides. It plays an essential role in the metabolism, it may be involved in nitrogen supply or protein turnover. This is Aminopeptidase N (pepN) from Lactococcus lactis subsp. cremoris (strain MG1363).